The primary structure comprises 412 residues: Alpha-1-antiproteinase (412 aa).

An N-terminal signal peptide occupies residues 1 to 24 (MTPSISWGLLLLAGLFCLVPSFLA). A Phosphoserine modification is found at serine 33. 4 N-linked (GlcNAc...) asparagine glycosylation sites follow: asparagine 100, asparagine 133, asparagine 264, and asparagine 313. Residues 367–386 (AATVLQAVPMSMPPILNFNK) form an RCL region. Serine 377 carries the phosphoserine modification.

Belongs to the serpin family. Interacts with CELA2A. Interacts with ERGIC3 and LMAN1/ERGIC53. Interacts with PRSS1/Trypsin. Expressed not only in liver but also in kidney tubule cells, where it is regulated by androgens during development.

Its subcellular location is the secreted. Its function is as follows. Inhibitor of serine proteases. Its primary target is elastase, but it also has a moderate affinity for plasmin and thrombin. The polypeptide is Alpha-1-antiproteinase (Serpina1) (Mus caroli (Ryukyu mouse)).